Consider the following 646-residue polypeptide: Aquaglycerol porin AQY3 (646 aa).

Residues 1-14 (MSYESGRSSSSSES) show a composition bias toward low complexity. Disordered stretches follow at residues 1–68 (MSYE…SRNK) and 175–262 (KNMD…KKRT). Residues 1–350 (MSYESGRSSS…AKIRYHMREP (350 aa)) lie on the Cytoplasmic side of the membrane. Residues 19–41 (TLKEEPNGKIAWEESVKKSRENN) are compositionally biased toward basic and acidic residues. A compositionally biased stretch (polar residues) spans 190–201 (TDISRGGSTTSV). A helical transmembrane segment spans residues 351–371 (FAEFLGTLVLVIFGVGGNLQA). The Extracellular segment spans residues 372–383 (TVTKGSGGSYES). The chain crosses the membrane as a helical span at residues 384 to 404 (LSFAWGFGCMLGVYVAGGISG). Topologically, residues 405-427 (GHINPAVTISMAIFRKFPWKKVP) are cytoplasmic. An NPA 1 motif is present at residues 408–410 (NPA). A helical membrane pass occupies residues 428 to 448 (VYIVAQIIGAYFGGAMAYGYF). The Extracellular portion of the chain corresponds to 449–481 (WSSITEFEGGPHIRTTATGACLFTDPKSYVTWR). A helical transmembrane segment spans residues 482 to 502 (NAFFDEFIGASILVGCLMALL). Topologically, residues 503–509 (DDSNAPP) are cytoplasmic. Residues 510–530 (GNGMTALIIGFLVAAIGMALG) traverse the membrane as a helical segment. The Extracellular portion of the chain corresponds to 531–569 (YQTSFTINPARDLGPRIFASMIGYGPHAFHLTHWWWTWG). Residues 538-540 (NPA) carry the NPA 2 motif. Residues 570–590 (AWGGPIAGGIAGALIYDIFIF) form a helical membrane-spanning segment. Over 591–646 (TGCESPVNYPDNGYIENRVGKLLHAEFHQNDGTVSDESGVNSNSNTGSKKSVPTSS) the chain is Cytoplasmic. Residues 621-646 (DGTVSDESGVNSNSNTGSKKSVPTSS) are disordered.

Belongs to the MIP/aquaporin (TC 1.A.8) family.

It is found in the cell membrane. It carries out the reaction glycerol(in) = glycerol(out). Functionally, channel protein that mediates glycerol entry under ethanol stimulation. Does not seem to mediate glycerol uptake under standard conditions. In Saccharomyces cerevisiae (strain ATCC 204508 / S288c) (Baker's yeast), this protein is Aquaglycerol porin AQY3.